The following is a 323-amino-acid chain: CYFIP-related Rac1 interactor A (323 aa).

It belongs to the CYRI family.

It localises to the membrane. Its function is as follows. May negatively regulate RAC1 signaling and RAC1-driven cytoskeletal remodeling. May regulate chemotaxis, cell migration and epithelial polarization by controlling the polarity, plasticity, duration and extent of protrusions. The sequence is that of CYFIP-related Rac1 interactor A (CYRIA) from Gallus gallus (Chicken).